The chain runs to 202 residues: Endothelin-1 (202 aa).

The N-terminal stretch at 1–25 is a signal peptide; sequence MDYLPVLFSLLLVVFQGAPEAAVLG. A propeptide spanning residues 26–50 is cleaved from the precursor; the sequence is AELSTGPDSGGEKPAPSAPWRPRRS. Residues 28–48 form a disordered region; sequence LSTGPDSGGEKPAPSAPWRPR. Disulfide bonds link cysteine 53-cysteine 67 and cysteine 55-cysteine 63. The propeptide occupies 74–202; the sequence is VNTPEHIVPY…EKKVTHNRTH (129 aa). Positions 110–124 are endothelin-like; it reads CQCASQKDKKCWTFC.

Belongs to the endothelin/sarafotoxin family.

The protein resides in the secreted. Functionally, endothelins are endothelium-derived vasoconstrictor peptides. Probable ligand for G-protein coupled receptors EDNRA and EDNRB which activates PTK2B, BCAR1, BCAR3 and, GTPases RAP1 and RHOA cascade in glomerular mesangial cells. Also binds the DEAR/FBXW7-AS1 receptor. Promotes mesenteric arterial wall remodeling via activation of ROCK signaling and subsequent colocalization of NFATC3 with F-actin filaments. NFATC3 then translocates to the nucleus where it subsequently promotes the transcription of the smooth muscle hypertrophy and differentiation marker ACTA2. This chain is Endothelin-1 (EDN1), found in Felis catus (Cat).